Here is a 303-residue protein sequence, read N- to C-terminus: UDP-N-acetylenolpyruvoylglucosamine reductase (303 aa).

The FAD-binding PCMH-type domain maps to 30-196; it reads IGGPADLLII…LEAVFKLKQD (167 aa). Arg174 is an active-site residue. The active-site Proton donor is Ser225. Residue Glu295 is part of the active site.

This sequence belongs to the MurB family. The cofactor is FAD.

It is found in the cytoplasm. It catalyses the reaction UDP-N-acetyl-alpha-D-muramate + NADP(+) = UDP-N-acetyl-3-O-(1-carboxyvinyl)-alpha-D-glucosamine + NADPH + H(+). It participates in cell wall biogenesis; peptidoglycan biosynthesis. Functionally, cell wall formation. The sequence is that of UDP-N-acetylenolpyruvoylglucosamine reductase from Bacillus pumilus (strain SAFR-032).